Here is a 146-residue protein sequence, read N- to C-terminus: Hemoglobin subunit beta-1 (146 aa).

Positions 2–146 constitute a Globin domain; that stretch reads VWTNEERSII…VVSALGKQYH (145 aa). Positions 63 and 92 each coordinate heme b.

The protein belongs to the globin family. Hb1 is a heterotetramer of two alpha chains and two beta-1 chains. In terms of tissue distribution, red blood cells.

Its function is as follows. Involved in oxygen transport from gills to the various peripheral tissues. The protein is Hemoglobin subunit beta-1 (hbb1) of Pseudaphritis urvillii (Congolli).